A 270-amino-acid polypeptide reads, in one-letter code: F420 non-reducing hydrogenase II cytochrome subunit (270 aa).

5 helical membrane-spanning segments follow: residues 27–47, 57–77, 139–159, 173–193, and 195–215; these read AIAMIVLIITGLKIYAGWEFM, MIAVPFLLAVNWILIPYNIFS, ILIPLEGLALFLITVSGIVLY, WIISISGMIAPTFGMTPVGFL, and VLHLLMTYWFIFELVVHVGIL.

It belongs to the HupC/HyaC/HydC family. In terms of assembly, composed of a large subunit (VhtA), a small subunit (VhtG) and a cytochrome subunit (VhtC). Heme b is required as a cofactor.

Its subcellular location is the cell membrane. The enzyme catalyses methanophenazine + H2 = dihydromethanophenazine. Part of the F420 non-reducing hydrogenase II complex that catalyzes the reduction of methanophenazine to dihydromethanophenazine. This chain is F420 non-reducing hydrogenase II cytochrome subunit, found in Methanosarcina mazei (strain ATCC BAA-159 / DSM 3647 / Goe1 / Go1 / JCM 11833 / OCM 88) (Methanosarcina frisia).